The chain runs to 142 residues: Fusaric acid resistance protein FusB (142 aa).

The interval 73–142 is disordered; sequence AAPCSRKAST…ASCSPAIRPR (70 aa). Positions 81–142 are enriched in low complexity; the sequence is STGSPARSSG…ASCSPAIRPR (62 aa).

Its function is as follows. Involved in the resistance (detoxification) of the fungal toxin fusaric acid. This Burkholderia cepacia (Pseudomonas cepacia) protein is Fusaric acid resistance protein FusB (fusB).